Reading from the N-terminus, the 291-residue chain is ATP synthase subunit a (291 aa).

A run of 6 helical transmembrane segments spans residues 50-70 (LDSMGWSIGLGVIFCLLFWIV), 108-128 (IAPLALTIFVWIFLMNLMDLI), 161-181 (DPNITLGMSLSVFVLILFYSI), 203-223 (PVAKALLIPVNLILELVTFLA), 241-261 (LIFILIALLPFWIQWALSVPW), and 262-282 (AIFHILVITLQAFIFMMLTIV).

This sequence belongs to the ATPase A chain family. F-type ATPases have 2 components, CF(1) - the catalytic core - and CF(0) - the membrane proton channel. CF(1) has five subunits: alpha(3), beta(3), gamma(1), delta(1), epsilon(1). CF(0) has three main subunits: a(1), b(2) and c(9-12). The alpha and beta chains form an alternating ring which encloses part of the gamma chain. CF(1) is attached to CF(0) by a central stalk formed by the gamma and epsilon chains, while a peripheral stalk is formed by the delta and b chains.

It is found in the cell inner membrane. In terms of biological role, key component of the proton channel; it plays a direct role in the translocation of protons across the membrane. The sequence is that of ATP synthase subunit a from Acinetobacter baumannii (strain SDF).